The chain runs to 192 residues: Phosphoheptose isomerase (192 aa).

Residues 37–192 enclose the SIS domain; it reads IAASLRDGGK…IMLIEKELAV (156 aa). 52–54 contributes to the substrate binding site; that stretch reads NGG. His-61 and Glu-65 together coordinate Zn(2+). Residues Glu-65, 93–94, 119–121, Ser-124, and Gln-172 contribute to the substrate site; these read ND and STS. 2 residues coordinate Zn(2+): Gln-172 and His-180.

Belongs to the SIS family. GmhA subfamily. In terms of assembly, homotetramer. Zn(2+) is required as a cofactor.

The protein resides in the cytoplasm. It catalyses the reaction 2 D-sedoheptulose 7-phosphate = D-glycero-alpha-D-manno-heptose 7-phosphate + D-glycero-beta-D-manno-heptose 7-phosphate. It functions in the pathway carbohydrate biosynthesis; D-glycero-D-manno-heptose 7-phosphate biosynthesis; D-glycero-alpha-D-manno-heptose 7-phosphate and D-glycero-beta-D-manno-heptose 7-phosphate from sedoheptulose 7-phosphate: step 1/1. Functionally, catalyzes the isomerization of sedoheptulose 7-phosphate in D-glycero-D-manno-heptose 7-phosphate. The sequence is that of Phosphoheptose isomerase from Tolumonas auensis (strain DSM 9187 / NBRC 110442 / TA 4).